The sequence spans 61 residues: Large ribosomal subunit protein eL29 (61 aa).

Over residues M1–K26 the composition is skewed to basic residues. The tract at residues M1–L32 is disordered.

Belongs to the eukaryotic ribosomal protein eL29 family. Component of the large ribosomal subunit (LSU). Mature yeast ribosomes consist of a small (40S) and a large (60S) subunit. The 40S small subunit contains 1 molecule of ribosomal RNA (18S rRNA) and at least 33 different proteins. The large 60S subunit contains 3 rRNA molecules (25S, 5.8S and 5S rRNA) and at least 46 different proteins.

Its subcellular location is the cytoplasm. The protein localises to the nucleus. It localises to the nucleolus. In terms of biological role, component of the ribosome, a large ribonucleoprotein complex responsible for the synthesis of proteins in the cell. The small ribosomal subunit (SSU) binds messenger RNAs (mRNAs) and translates the encoded message by selecting cognate aminoacyl-transfer RNA (tRNA) molecules. The large subunit (LSU) contains the ribosomal catalytic site termed the peptidyl transferase center (PTC), which catalyzes the formation of peptide bonds, thereby polymerizing the amino acids delivered by tRNAs into a polypeptide chain. The nascent polypeptides leave the ribosome through a tunnel in the LSU and interact with protein factors that function in enzymatic processing, targeting, and the membrane insertion of nascent chains at the exit of the ribosomal tunnel. The sequence is that of Large ribosomal subunit protein eL29 (rpl29) from Schizosaccharomyces pombe (strain 972 / ATCC 24843) (Fission yeast).